An 88-amino-acid chain; its full sequence is Small ribosomal subunit protein uS15 (88 aa).

This sequence belongs to the universal ribosomal protein uS15 family. As to quaternary structure, part of the 30S ribosomal subunit. Forms a bridge to the 50S subunit in the 70S ribosome, contacting the 23S rRNA.

One of the primary rRNA binding proteins, it binds directly to 16S rRNA where it helps nucleate assembly of the platform of the 30S subunit by binding and bridging several RNA helices of the 16S rRNA. Functionally, forms an intersubunit bridge (bridge B4) with the 23S rRNA of the 50S subunit in the ribosome. The sequence is that of Small ribosomal subunit protein uS15 from Caldicellulosiruptor saccharolyticus (strain ATCC 43494 / DSM 8903 / Tp8T 6331).